The primary structure comprises 335 residues: Beta-1,4-mannooligosaccharide phosphorylase (335 aa).

The protein belongs to the glycosyl hydrolase 130 family. Homohexamer in solution.

The enzyme catalyses [(1-&gt;4)-beta-D-mannosyl](n) + phosphate = [(1-&gt;4)-beta-D-mannosyl](n-1) + alpha-D-mannose 1-phosphate. Catalyzes the phosphorolysis of beta-1,4-mannooligosaccharides to mannose 1-phosphate (Man1P) and shorter mannooligosaccharides. Can also catalyze the phosphorolysis of 4-O-beta-D-mannopyranosyl-D-glucopyranose (Man-Glc), but shows higher activity toward longer mannooligosaccharides. Involved in a mannan catabolic pathway which feeds into glycolysis. The protein is Beta-1,4-mannooligosaccharide phosphorylase of Ruminococcus albus (strain ATCC 27210 / DSM 20455 / JCM 14654 / NCDO 2250 / 7).